The primary structure comprises 107 residues: Cytochrome c2 (107 aa).

Heme c-binding residues include Cys-14, Cys-17, His-18, and Met-80.

The protein belongs to the cytochrome c family. In terms of processing, binds 1 heme c group covalently per subunit.

Functionally, cytochrome c2 is found mainly in purple, non-sulfur, photosynthetic bacteria where it functions as the electron donor to the oxidized bacteriochlorophyll in the photophosphorylation pathway. However, it may also have a role in the respiratory chain and is found in some non-photosynthetic bacteria. This is Cytochrome c2 from Rhodoblastus acidophilus (Rhodopseudomonas acidophila).